The sequence spans 1783 residues: Doublecortin domain-containing protein 1 (1783 aa).

A disordered region spans residues 93–133 (GLQDCSTHQTASDHSHDEISDLDSYKSNSKNNSCSISASKR). Positions 117 to 131 (YKSNSKNNSCSISAS) are enriched in low complexity. The 85-residue stretch at 168-252 (KLQPRVIKVT…FLNPFKKIKD (85 aa)) folds into the Doublecortin 1 domain. Positions 702–800 (WLITKTGMIL…HIHHGAWTTA (99 aa)) constitute a Ricin B-type lectin 1 domain. The segment at 860–880 (ASAQRWAIKHEGTSKPGQWKH) is disordered. The 91-residue stretch at 925 to 1015 (PICKTTEPYA…ELWINPDLSI (91 aa)) folds into the Doublecortin 2 domain. The Ricin B-type lectin 2 domain occupies 1151–1266 (SCSPKHSKLH…GAANQKWHYM (116 aa)).

In terms of assembly, interacts with dynein intermediate chain, tubulin, RAB8A, RAB3IP, NUDC, PAFAH1B1 and DCTN1.

It is found in the midbody. It localises to the midbody ring. Its subcellular location is the cytoplasm. The protein localises to the cytoskeleton. The protein resides in the spindle. Its function is as follows. Microtubule-binding protein which plays an important role in mediating dynein-dependent transport of RAB8A-positive vesicles to the midbody during cytokinesis. This chain is Doublecortin domain-containing protein 1, found in Homo sapiens (Human).